The following is a 267-amino-acid chain: Undecaprenyl-diphosphatase (267 aa).

8 helical membrane passes run 1–21 (MSYFEAFMLALVQGFTEFLPI), 39–59 (QGLAFDVAVHVGTLAAVVIYF), 83–103 (AKLAWMIILATIPACIFGLLM), 111–131 (LRSAWVIATTTIIFGLLLWWV), 144–164 (AGWKKALFIGLAQAMAIIPGT), 189–209 (FLMSIPIITLAGGYLGLKLVT), 218–238 (TLLTGIVVSFISAYICIHFFL), and 246–266 (MTPFVIYRLILGFGLFAFLMM).

The protein belongs to the UppP family.

Its subcellular location is the cell inner membrane. It carries out the reaction di-trans,octa-cis-undecaprenyl diphosphate + H2O = di-trans,octa-cis-undecaprenyl phosphate + phosphate + H(+). Catalyzes the dephosphorylation of undecaprenyl diphosphate (UPP). Confers resistance to bacitracin. The chain is Undecaprenyl-diphosphatase from Vibrio atlanticus (strain LGP32) (Vibrio splendidus (strain Mel32)).